A 368-amino-acid chain; its full sequence is Abasic site processing protein YMR114C (368 aa).

Cysteine 2 (nucleophile) is an active-site residue. Residue cysteine 2 is modified to Thiazolidine linkage to a ring-opened DNA abasic site. Residues 25–48 (VNTPKDASSNSQHPHDEEDTKDQP) form a disordered region. Positions 37 to 46 (HPHDEEDTKD) are enriched in basic and acidic residues. Glutamate 132 is a catalytic residue. A disordered region spans residues 270–368 (LENDNEQGID…DSRGKKKIKK (99 aa)). Composition is skewed to basic and acidic residues over residues 281 to 296 (RGVK…DVFN), 304 to 313 (NSYDGLKKNE), and 326 to 349 (IGDR…EKRN). Position 338 is a phosphoserine (serine 338).

This sequence belongs to the SOS response-associated peptidase family.

It localises to the chromosome. With respect to regulation, formation and reversal of DNA-protein cross-link depends on DNA context. Catalyzes formation of the thiazolidine linkage in presence of abasic sites in single-stranded DNA. Mediates the reversal of the thiazolidine cross-link in presence of double stranded DNA. Functionally, sensor of abasic sites in single-stranded DNA (ssDNA) required to preserve genome integrity by promoting error-free repair of abasic sites. Recognizes and binds abasic sites in ssDNA at replication forks and chemically modifies the lesion by forming a covalent cross-link with DNA: forms a stable thiazolidine linkage between a ring-opened abasic site and the alpha-amino and sulfhydryl substituents of its N-terminal catalytic cysteine residue. The DNA-protein cross-link is then reversed: able to catalyze the reversal of the thiazolidine cross-link and cycle between a cross-link and a non-cross-linked state depending on DNA context: mediates self-reversal of the thiazolidine cross-link in double stranded DNA. Acts as a protease: mediates autocatalytic processing of its N-terminal methionine in order to expose the catalytic cysteine. This Saccharomyces cerevisiae (strain ATCC 204508 / S288c) (Baker's yeast) protein is Abasic site processing protein YMR114C.